The sequence spans 578 residues: mRNA-decapping enzyme 1B (578 aa).

Ala2 is subject to N-acetylalanine. A phosphoserine mark is found at Ser144 and Ser145. Disordered stretches follow at residues 187 to 222 and 246 to 265; these read AICD…PEPQ and RTFA…TRPV. The segment covering 248 to 257 has biased composition (basic residues); the sequence is FAHHHHHHHQ. Residues Ser274 and Ser335 each carry the phosphoserine modification. Thr380 is modified (phosphothreonine).

The protein belongs to the DCP1 family. As to quaternary structure, interacts with DCP1A.

The protein resides in the cytoplasm. Its subcellular location is the nucleus. It catalyses the reaction a 5'-end (N(7)-methyl 5'-triphosphoguanosine)-ribonucleoside in mRNA + H2O = N(7)-methyl-GDP + a 5'-end phospho-ribonucleoside in mRNA + 2 H(+). In terms of biological role, may play a role in the degradation of mRNAs, both in normal mRNA turnover and in nonsense-mediated mRNA decay. May remove the 7-methyl guanine cap structure from mRNA molecules, yielding a 5'-phosphorylated mRNA fragment and 7m-GDP. The sequence is that of mRNA-decapping enzyme 1B (Dcp1b) from Mus musculus (Mouse).